A 64-amino-acid polypeptide reads, in one-letter code: uncharacterized protein (64 aa).

The helical transmembrane segment at 15 to 37 (VVVPRFVRFIVYVVLFTVAVQRV) threads the bilayer.

Belongs to the HHV-5 US34A protein family.

The protein localises to the host membrane. This is an uncharacterized protein from Homo sapiens (Human).